We begin with the raw amino-acid sequence, 542 residues long: DM7 family protein GG17591 (542 aa).

Basic and acidic residues predominate over residues 415 to 430; sequence GETQEMDEAHPTKEES. The segment at 415–443 is disordered; it reads GETQEMDEAHPTKEESKSEEEGEVQSGSQ.

The protein belongs to the DM7 family.

The polypeptide is DM7 family protein GG17591 (Drosophila erecta (Fruit fly)).